The chain runs to 141 residues: Lutropin subunit beta (141 aa).

A signal peptide spans Met-1–Ala-20. 6 cysteine pairs are disulfide-bonded: Cys-29–Cys-77, Cys-43–Cys-92, Cys-46–Cys-130, Cys-54–Cys-108, Cys-58–Cys-110, and Cys-113–Cys-120. Residue Asn-33 is glycosylated (N-linked (GlcNAc...) asparagine).

This sequence belongs to the glycoprotein hormones subunit beta family. In terms of assembly, heterodimer of a common alpha chain and a unique beta chain which confers biological specificity to thyrotropin, lutropin, follitropin and gonadotropin.

It is found in the secreted. Its function is as follows. Promotes spermatogenesis and ovulation by stimulating the testes and ovaries to synthesize steroids. This chain is Lutropin subunit beta (LHB), found in Ailuropoda melanoleuca (Giant panda).